Here is a 105-residue protein sequence, read N- to C-terminus: MGCCGCGSCGGCGGRCGGGCGGGCSGGCGGGCGGGCGGGCGSCTTCRCYRVGCCSSCCPCCRGCCGGCCSTPVICCCRRTCGSCGCGYGKGCCQQKCCCQKQCCC.

The 14 X 2 AA repeats of CG stretch occupies residues 4-87 (CGCGSCGGCG…RRTCGSCGCG (84 aa)).

This sequence belongs to the KRTAP type 28 family.

In the hair cortex, hair keratin intermediate filaments are embedded in an interfilamentous matrix, consisting of hair keratin-associated proteins (KRTAP), which are essential for the formation of a rigid and resistant hair shaft through their extensive disulfide bond cross-linking with abundant cysteine residues of hair keratins. The matrix proteins include the high-sulfur and high-glycine-tyrosine keratins. This Homo sapiens (Human) protein is Small cysteine and glycine repeat-containing protein 4.